Reading from the N-terminus, the 101-residue chain is MAKKSAVNRNLAVKALVKQYASKRVALKAIANDESLPLEERFEARLKLAKLPRSSSAVRIRNRCEVTGRPRAYYRKLKMSRIALRELGSSGQIPGLVKSSW.

It belongs to the universal ribosomal protein uS14 family. Part of the 30S ribosomal subunit. Contacts proteins S3 and S10.

Its function is as follows. Binds 16S rRNA, required for the assembly of 30S particles and may also be responsible for determining the conformation of the 16S rRNA at the A site. The protein is Small ribosomal subunit protein uS14 of Caulobacter sp. (strain K31).